A 122-amino-acid polypeptide reads, in one-letter code: Small ribosomal subunit protein uS13 (122 aa).

The segment at 96–122 (PVRGQRTRTNARTRKGPKKTVGVRRAK) is disordered.

Belongs to the universal ribosomal protein uS13 family. As to quaternary structure, part of the 30S ribosomal subunit. Forms a loose heterodimer with protein S19. Forms two bridges to the 50S subunit in the 70S ribosome.

Its function is as follows. Located at the top of the head of the 30S subunit, it contacts several helices of the 16S rRNA. In the 70S ribosome it contacts the 23S rRNA (bridge B1a) and protein L5 of the 50S subunit (bridge B1b), connecting the 2 subunits; these bridges are implicated in subunit movement. Contacts the tRNAs in the A and P-sites. In Halothermothrix orenii (strain H 168 / OCM 544 / DSM 9562), this protein is Small ribosomal subunit protein uS13.